An 85-amino-acid polypeptide reads, in one-letter code: Toxin BmKAEP (85 aa).

An N-terminal signal peptide occupies residues 1–21 (MKLFLLLVISASMLIDGLVNA). The LCN-type CS-alpha/beta domain occupies 22-82 (DGYIRGSNGC…TWKSESNTCG (61 aa)). 4 cysteine pairs are disulfide-bonded: Cys-31–Cys-81, Cys-35–Cys-56, Cys-42–Cys-63, and Cys-46–Cys-65. Residue Gly-82 is modified to Glycine amide.

In terms of tissue distribution, expressed by the venom gland.

The protein resides in the secreted. In terms of biological role, shows anti-epileptic activity. Shares high homology with depressant insect toxins, but shows very weak toxicity against mammals and insects and no obvious symptoms on insect larvae. May target voltage-gated sodium channel (Nav). This Olivierus martensii (Manchurian scorpion) protein is Toxin BmKAEP.